Reading from the N-terminus, the 2000-residue chain is E3 ubiquitin-protein ligase TTC3 (2000 aa).

Residues 20-249 are interaction with POLG; that stretch reads MDDFAEGGLS…RHSCMQCVKQ (230 aa). TPR repeat units lie at residues 250-283 and 284-317; these read GELM…RPEN and HLLY…KNTW. S397 bears the Phosphoserine mark. The interval 442–478 is disordered; sequence CDCHPEFLPPPSQPPRHKGKQKSRNNESEKPSSNSQV. TPR repeat units follow at residues 556-592 and 596-629; these read VLVV…YPNE and CLAY…ICRL. The disordered stretch occupies residues 804–828; the sequence is AQERMEEDLRESNPPKPEEPEETVE. Residue S1029 is modified to Phosphoserine. Disordered regions lie at residues 1041-1087, 1233-1308, 1423-1448, 1806-1839, and 1894-1947; these read NKGK…GPFA, FQPD…PEDA, QSST…SSDS, LEVK…QSQK, and EEQK…VPAP. Residues 1059–1070 are compositionally biased toward polar residues; sequence GTASVTPSSETV. S1080 is subject to Phosphoserine. The span at 1268–1277 shows a compositional bias: low complexity; it reads DSDSSSGSAS. Polar residues predominate over residues 1829–1839; sequence GQATRSSQSQK. The span at 1894-1911 shows a compositional bias: basic and acidic residues; that stretch reads EEQKKKKPNPGKDKKTSE. Over residues 1912–1934 the composition is skewed to low complexity; that stretch reads AHPAASVSKSSPSPPLAAAGPSA. The segment at 1952 to 1991 adopts an RING-type; atypical zinc-finger fold; it reads CQICHEIFKSKNMRVLKCGHKFHKGCFKQWLKGQSTCPTC.

Interacts (when phosphorylated on Ser-397) with AKT1, AKT2 and AKT3 (when phosphorylated). Interacts with CIT. Interacts with POLG. Interacts with HSP70. Interacts with SMURF2. Phosphorylation on Ser-397 by Akt is required for ubiquitin ligase activity. In terms of processing, proteolytically cleaved into differently sized N- and C-terminal fragments.

The protein resides in the nucleus. The protein localises to the cytoplasm. It is found in the golgi apparatus. The enzyme catalyses S-ubiquitinyl-[E2 ubiquitin-conjugating enzyme]-L-cysteine + [acceptor protein]-L-lysine = [E2 ubiquitin-conjugating enzyme]-L-cysteine + N(6)-ubiquitinyl-[acceptor protein]-L-lysine.. It participates in protein modification; protein ubiquitination. In terms of biological role, E3 ubiquitin-protein ligase which catalyzes the formation of 'Lys-48'-polyubiquitin chains. Mediates the ubiquitination and subsequent degradation of phosphorylated Akt (AKT1, AKT2 and AKT3) in the nucleus. Acts as a terminal regulator of Akt signaling after activation; its phosphorylation by Akt, which is a prerequisite for ubiquitin ligase activity, suggests the existence of a regulation mechanism required to control Akt levels after activation. Positively regulates TGFB1-induced epithelial-mesenchymal transition and myofibroblast differentiation by mediating the ubiquitination and subsequent degradation of SMURF2. Regulates neuronal differentiation by regulating actin remodeling and Golgi organization via a signaling cascade involving RHOA, CIT and ROCK. Inhibits cell proliferation. The polypeptide is E3 ubiquitin-protein ligase TTC3 (Rattus norvegicus (Rat)).